Reading from the N-terminus, the 882-residue chain is Alanine--tRNA ligase (882 aa).

Residues His-568, His-572, Cys-670, and His-674 each contribute to the Zn(2+) site.

This sequence belongs to the class-II aminoacyl-tRNA synthetase family. It depends on Zn(2+) as a cofactor.

The protein localises to the cytoplasm. It catalyses the reaction tRNA(Ala) + L-alanine + ATP = L-alanyl-tRNA(Ala) + AMP + diphosphate. In terms of biological role, catalyzes the attachment of alanine to tRNA(Ala) in a two-step reaction: alanine is first activated by ATP to form Ala-AMP and then transferred to the acceptor end of tRNA(Ala). Also edits incorrectly charged Ser-tRNA(Ala) and Gly-tRNA(Ala) via its editing domain. This chain is Alanine--tRNA ligase, found in Syntrophotalea carbinolica (strain DSM 2380 / NBRC 103641 / GraBd1) (Pelobacter carbinolicus).